We begin with the raw amino-acid sequence, 100 residues long: UPF0213 protein YhbQ (100 aa).

The 76-residue stretch at 2–77 (TPWYLYLIRT…KQLTKRQKER (76 aa)) folds into the GIY-YIG domain.

The protein belongs to the UPF0213 family.

The sequence is that of UPF0213 protein YhbQ from Salmonella choleraesuis (strain SC-B67).